The chain runs to 128 residues: Ribosome-binding factor A (128 aa).

This sequence belongs to the RbfA family. In terms of assembly, monomer. Binds 30S ribosomal subunits, but not 50S ribosomal subunits or 70S ribosomes.

It localises to the cytoplasm. In terms of biological role, one of several proteins that assist in the late maturation steps of the functional core of the 30S ribosomal subunit. Associates with free 30S ribosomal subunits (but not with 30S subunits that are part of 70S ribosomes or polysomes). Required for efficient processing of 16S rRNA. May interact with the 5'-terminal helix region of 16S rRNA. This is Ribosome-binding factor A from Geobacillus thermodenitrificans (strain NG80-2).